Consider the following 292-residue polypeptide: Phosphatidylglycerol--prolipoprotein diacylglyceryl transferase (292 aa).

The next 3 membrane-spanning stretches (helical) occupy residues 18–38, 67–87, and 105–125; these read LFGV…GLLI, LLTW…VLFY, and GGMS…AFCL. Arg-150 is an a 1,2-diacyl-sn-glycero-3-phospho-(1'-sn-glycerol) binding site. The next 3 helical transmembrane spans lie at 193–213, 222–242, and 266–286; these read QIYE…LLVW, GSVS…VEFV, and GLTM…YLIL.

Belongs to the Lgt family.

The protein resides in the cell inner membrane. The catalysed reaction is L-cysteinyl-[prolipoprotein] + a 1,2-diacyl-sn-glycero-3-phospho-(1'-sn-glycerol) = an S-1,2-diacyl-sn-glyceryl-L-cysteinyl-[prolipoprotein] + sn-glycerol 1-phosphate + H(+). Its pathway is protein modification; lipoprotein biosynthesis (diacylglyceryl transfer). Its function is as follows. Catalyzes the transfer of the diacylglyceryl group from phosphatidylglycerol to the sulfhydryl group of the N-terminal cysteine of a prolipoprotein, the first step in the formation of mature lipoproteins. This chain is Phosphatidylglycerol--prolipoprotein diacylglyceryl transferase, found in Cereibacter sphaeroides (strain ATCC 17029 / ATH 2.4.9) (Rhodobacter sphaeroides).